The chain runs to 64 residues: Large ribosomal subunit protein bL35 (64 aa).

The segment at M1–L44 is disordered. Over residues A10–L44 the composition is skewed to basic residues.

The protein belongs to the bacterial ribosomal protein bL35 family.

This is Large ribosomal subunit protein bL35 from Halorhodospira halophila (strain DSM 244 / SL1) (Ectothiorhodospira halophila (strain DSM 244 / SL1)).